A 132-amino-acid chain; its full sequence is Agouti-signaling protein (132 aa).

Positions 1 to 22 (MDVTRLLLATLLVFLCFFTACS) are cleaved as a signal peptide. N-linked (GlcNAc...) asparagine glycosylation is present at Asn-39. The segment at 61–87 (QISRKEAEKKRSSKKEASMKKVARPRT) is disordered. Basic and acidic residues predominate over residues 63 to 79 (SRKEAEKKRSSKKEASM). Cystine bridges form between Cys-93–Cys-108, Cys-100–Cys-114, Cys-107–Cys-125, Cys-111–Cys-132, and Cys-116–Cys-123. The region spanning 93–132 (CVATRDSCKPPAPACCDPCASCQCRFFRSACSCRVLSLNC) is the Agouti domain.

It is found in the secreted. In terms of biological role, involved in the regulation of melanogenesis. The binding of ASP to MC1R precludes alpha-MSH initiated signaling and thus blocks production of cAMP, leading to a down-regulation of eumelanogenesis (brown/black pigment) and thus increasing synthesis of pheomelanin (yellow/red pigment). The chain is Agouti-signaling protein (ASIP) from Macaca nigrescens (Gorontalo macaque).